The following is a 287-amino-acid chain: Phosphatidylserine decarboxylase proenzyme (287 aa).

Residues aspartate 89, histidine 146, and serine 252 each act as charge relay system; for autoendoproteolytic cleavage activity in the active site. Residue serine 252 is the Schiff-base intermediate with substrate; via pyruvic acid; for decarboxylase activity of the active site. Serine 252 carries the post-translational modification Pyruvic acid (Ser); by autocatalysis.

The protein belongs to the phosphatidylserine decarboxylase family. PSD-B subfamily. Prokaryotic type I sub-subfamily. In terms of assembly, heterodimer of a large membrane-associated beta subunit and a small pyruvoyl-containing alpha subunit. Pyruvate is required as a cofactor. Post-translationally, is synthesized initially as an inactive proenzyme. Formation of the active enzyme involves a self-maturation process in which the active site pyruvoyl group is generated from an internal serine residue via an autocatalytic post-translational modification. Two non-identical subunits are generated from the proenzyme in this reaction, and the pyruvate is formed at the N-terminus of the alpha chain, which is derived from the carboxyl end of the proenzyme. The autoendoproteolytic cleavage occurs by a canonical serine protease mechanism, in which the side chain hydroxyl group of the serine supplies its oxygen atom to form the C-terminus of the beta chain, while the remainder of the serine residue undergoes an oxidative deamination to produce ammonia and the pyruvoyl prosthetic group on the alpha chain. During this reaction, the Ser that is part of the protease active site of the proenzyme becomes the pyruvoyl prosthetic group, which constitutes an essential element of the active site of the mature decarboxylase.

The protein localises to the cell membrane. The catalysed reaction is a 1,2-diacyl-sn-glycero-3-phospho-L-serine + H(+) = a 1,2-diacyl-sn-glycero-3-phosphoethanolamine + CO2. The protein operates within phospholipid metabolism; phosphatidylethanolamine biosynthesis; phosphatidylethanolamine from CDP-diacylglycerol: step 2/2. Functionally, catalyzes the formation of phosphatidylethanolamine (PtdEtn) from phosphatidylserine (PtdSer). This Shewanella woodyi (strain ATCC 51908 / MS32) protein is Phosphatidylserine decarboxylase proenzyme.